The chain runs to 264 residues: 3-methyl-2-oxobutanoate hydroxymethyltransferase (264 aa).

Residues Asp45 and Asp84 each contribute to the Mg(2+) site. Residues 45-46, Asp84, and Lys112 each bind 3-methyl-2-oxobutanoate; that span reads DS. Glu114 is a binding site for Mg(2+). Glu181 serves as the catalytic Proton acceptor.

Belongs to the PanB family. Homodecamer; pentamer of dimers. Requires Mg(2+) as cofactor.

It localises to the cytoplasm. The catalysed reaction is 3-methyl-2-oxobutanoate + (6R)-5,10-methylene-5,6,7,8-tetrahydrofolate + H2O = 2-dehydropantoate + (6S)-5,6,7,8-tetrahydrofolate. It functions in the pathway cofactor biosynthesis; (R)-pantothenate biosynthesis; (R)-pantoate from 3-methyl-2-oxobutanoate: step 1/2. In terms of biological role, catalyzes the reversible reaction in which hydroxymethyl group from 5,10-methylenetetrahydrofolate is transferred onto alpha-ketoisovalerate to form ketopantoate. The polypeptide is 3-methyl-2-oxobutanoate hydroxymethyltransferase (Aliivibrio fischeri (strain MJ11) (Vibrio fischeri)).